We begin with the raw amino-acid sequence, 95 residues long: Small ribosomal subunit protein bS6 (95 aa).

The protein belongs to the bacterial ribosomal protein bS6 family.

In terms of biological role, binds together with bS18 to 16S ribosomal RNA. The sequence is that of Small ribosomal subunit protein bS6 from Corynebacterium diphtheriae (strain ATCC 700971 / NCTC 13129 / Biotype gravis).